A 228-amino-acid polypeptide reads, in one-letter code: L-ribulose-5-phosphate 4-epimerase UlaF (228 aa).

Residues 26-27 (GN), 43-44 (SG), and 72-73 (SS) each bind substrate. Residues Asp74, His93, and His95 each coordinate Zn(2+). The active-site Proton donor/acceptor is Asp118. Residue His167 coordinates Zn(2+). Residue Tyr225 is the Proton donor/acceptor of the active site.

Belongs to the aldolase class II family. AraD/FucA subfamily. Zn(2+) is required as a cofactor.

It catalyses the reaction L-ribulose 5-phosphate = D-xylulose 5-phosphate. The protein operates within cofactor degradation; L-ascorbate degradation; D-xylulose 5-phosphate from L-ascorbate: step 4/4. Catalyzes the isomerization of L-ribulose 5-phosphate to D-xylulose 5-phosphate. Is involved in the anaerobic L-ascorbate utilization. In Escherichia coli O139:H28 (strain E24377A / ETEC), this protein is L-ribulose-5-phosphate 4-epimerase UlaF.